Reading from the N-terminus, the 888-residue chain is Pumilio homology domain family member 4 (888 aa).

Residues Thr205, Thr212, and Thr252 each carry the phosphothreonine modification. Disordered regions lie at residues 236-270 (KAKKPSVGANNTAKTRTQSISFDNTPSSTSFIPPT) and 467-551 (MNSA…RKIE). Residues 243 to 270 (GANNTAKTRTQSISFDNTPSSTSFIPPT) are compositionally biased toward polar residues. Ser256 carries the post-translational modification Phosphoserine. Low complexity-rich tracts occupy residues 478–499 (NNNSMSSHNDNDNIGNSNYNNK) and 521–543 (NNNNNNNNNNNNNNNSNATNSNS). The region spanning 539-888 (TNSNSAEKQR…RIIGMLHLDS (350 aa)) is the PUM-HD domain. Pumilio repeat units lie at residues 563–598 (QYIGSIHSLCKDQHGCRFLQKQLDILGSKAADAIFE), 599–634 (ETKDYTVELMTDSFGNYLIQKLLEEVTTEQRIVLTK), 635–671 (ISSPHFVEISLNPHGTRALQKLIECIKTDEEAQIVVD), 672–707 (SLRPYTVQLSKDLNGNHVIQKCLQRLKPENFQFIFD), 708–743 (AISDSCIDIATHRHGCCVLQRCLDHGTTEQCDNLCD), 744–783 (KLLALVDKLTLDPFGNYVVQYIITKEAEKNKYDYTHKIVH), 784–821 (LLKPRAIELSIHKFGSNVIEKILKTAIVSEPMILEILN), and 823–861 (GGETGIQSLLNDSYGNYVLQTALDISHKQNDYLYKRLSE).

Functionally, is not essential for haploid growth, but may affect diploid formation. The chain is Pumilio homology domain family member 4 (PUF4) from Saccharomyces cerevisiae (strain ATCC 204508 / S288c) (Baker's yeast).